A 158-amino-acid polypeptide reads, in one-letter code: S-ribosylhomocysteine lyase (158 aa).

Fe cation contacts are provided by His-54, His-58, and Cys-125.

Belongs to the LuxS family. In terms of assembly, homodimer. The cofactor is Fe cation.

The catalysed reaction is S-(5-deoxy-D-ribos-5-yl)-L-homocysteine = (S)-4,5-dihydroxypentane-2,3-dione + L-homocysteine. Its function is as follows. Involved in the synthesis of autoinducer 2 (AI-2) which is secreted by bacteria and is used to communicate both the cell density and the metabolic potential of the environment. The regulation of gene expression in response to changes in cell density is called quorum sensing. Catalyzes the transformation of S-ribosylhomocysteine (RHC) to homocysteine (HC) and 4,5-dihydroxy-2,3-pentadione (DPD). The polypeptide is S-ribosylhomocysteine lyase (Lactococcus lactis subsp. cremoris (strain MG1363)).